A 225-amino-acid chain; its full sequence is 2-C-methyl-D-erythritol 4-phosphate cytidylyltransferase (225 aa).

The protein belongs to the IspD/TarI cytidylyltransferase family. IspD subfamily.

It catalyses the reaction 2-C-methyl-D-erythritol 4-phosphate + CTP + H(+) = 4-CDP-2-C-methyl-D-erythritol + diphosphate. Its pathway is isoprenoid biosynthesis; isopentenyl diphosphate biosynthesis via DXP pathway; isopentenyl diphosphate from 1-deoxy-D-xylulose 5-phosphate: step 2/6. Catalyzes the formation of 4-diphosphocytidyl-2-C-methyl-D-erythritol from CTP and 2-C-methyl-D-erythritol 4-phosphate (MEP). The protein is 2-C-methyl-D-erythritol 4-phosphate cytidylyltransferase of Chromobacterium violaceum (strain ATCC 12472 / DSM 30191 / JCM 1249 / CCUG 213 / NBRC 12614 / NCIMB 9131 / NCTC 9757 / MK).